We begin with the raw amino-acid sequence, 55 residues long: Accessory gland-specific peptide 70A (55 aa).

Positions 1–19 are cleaved as a signal peptide; it reads MKTLALFLVLVCVLGLVQS. The segment at 20 to 33 is essential for binding to sperm; that stretch reads WEWPWNRKPTKFPI. Hydroxyproline occurs at positions 28 and 32. I33 carries the isoleucine derivative modification. 3 positions are modified to hydroxyproline: P34, P36, and P38. A sufficient to induce PMR region spans residues 36-55; the sequence is PNPRDKWCRLNLGPAWGGRC. C43 and C55 are oxidised to a cystine.

Belongs to the Drosophila sex peptide family. In terms of processing, sperm-bound protein is cleaved to release an active C-terminal peptide. Gradual release from stored sperm may function to prolong PMR and enhance male reproductive success. As to expression, main cells of the accessory glands of males (paragonial gland).

The protein localises to the secreted. Functionally, male seminal protein which triggers short- and long-term post-mating behavioral responses (PMR) in female Drosophila. Binds initially to sperm where it is later cleaved to release an active peptide within the female reproductive tract. Signals via the sex peptide receptor (SPR) in female flies; may also act via other receptors. Moderates the activity of distinct neuronal circuitries in the female genital tract to promote specific PMRs including: enhanced ovulation, increased egg laying rate, increased feeding/foraging rate, induced antimicrobial peptide synthesis, reduced mating receptivity, reduced day-time sleep and reduced lifespan in multiple mated females. The protein is Accessory gland-specific peptide 70A (SP) of Drosophila melanogaster (Fruit fly).